Here is a 354-residue protein sequence, read N- to C-terminus: S-adenosylmethionine:tRNA ribosyltransferase-isomerase (354 aa).

Belongs to the QueA family. As to quaternary structure, monomer.

The protein resides in the cytoplasm. It carries out the reaction 7-aminomethyl-7-carbaguanosine(34) in tRNA + S-adenosyl-L-methionine = epoxyqueuosine(34) in tRNA + adenine + L-methionine + 2 H(+). Its pathway is tRNA modification; tRNA-queuosine biosynthesis. Functionally, transfers and isomerizes the ribose moiety from AdoMet to the 7-aminomethyl group of 7-deazaguanine (preQ1-tRNA) to give epoxyqueuosine (oQ-tRNA). This chain is S-adenosylmethionine:tRNA ribosyltransferase-isomerase, found in Salmonella heidelberg (strain SL476).